The following is a 321-amino-acid chain: Ras association domain-containing protein 4 (321 aa).

The segment at His-79 to Ala-159 is disordered. The segment covering Ser-98 to Ser-110 has biased composition (polar residues). Phosphoserine is present on Ser-141. A Ras-associating domain is found at Tyr-174–Leu-262. Positions Val-270–Leu-317 constitute an SARAH domain.

As to quaternary structure, interacts directly with activated KRAS in a GTP-dependent manner. In terms of tissue distribution, widely expressed. Frequently down-regulated in tumor cell lines.

Its function is as follows. Potential tumor suppressor. May act as a KRAS effector protein. May promote apoptosis and cell cycle arrest. This is Ras association domain-containing protein 4 (RASSF4) from Homo sapiens (Human).